Reading from the N-terminus, the 385-residue chain is Chaperone protein DnaJ (385 aa).

The J domain maps to 5-70; sequence DYYEVLGVAK…QKRAAYDRYG (66 aa). The CR-type zinc finger occupies 145–223; sequence GFDTEIRVPS…CDGVGRTRRN (79 aa). Cys158, Cys161, Cys175, Cys178, Cys197, Cys200, Cys211, and Cys214 together coordinate Zn(2+). CXXCXGXG motif repeat units lie at residues 158–165, 175–182, 197–204, and 211–218; these read CDTCHGSG, CRTCGGSG, CPTCHGTG, and CPSCDGVG.

It belongs to the DnaJ family. In terms of assembly, homodimer. Zn(2+) serves as cofactor.

It localises to the cytoplasm. Participates actively in the response to hyperosmotic and heat shock by preventing the aggregation of stress-denatured proteins and by disaggregating proteins, also in an autonomous, DnaK-independent fashion. Unfolded proteins bind initially to DnaJ; upon interaction with the DnaJ-bound protein, DnaK hydrolyzes its bound ATP, resulting in the formation of a stable complex. GrpE releases ADP from DnaK; ATP binding to DnaK triggers the release of the substrate protein, thus completing the reaction cycle. Several rounds of ATP-dependent interactions between DnaJ, DnaK and GrpE are required for fully efficient folding. Also involved, together with DnaK and GrpE, in the DNA replication of plasmids through activation of initiation proteins. The protein is Chaperone protein DnaJ of Bordetella pertussis (strain Tohama I / ATCC BAA-589 / NCTC 13251).